Here is a 218-residue protein sequence, read N- to C-terminus: Esterase FPY3 (218 aa).

Residues Ser-95, Asp-163, and His-190 each act as charge relay system in the active site.

This sequence belongs to the LovG family.

It participates in secondary metabolite biosynthesis. In terms of biological role, esterase; part of the gene cluster that mediates the biosynthesis of the gamma-pyrones fusapyrone (FPY) and deoxyfusapyrone (dFPY). FPY is an undecaketide and thus likely synthesized by the polyketide synthase FPY1 from acetyl-CoA functioning as starter unit and the addition of 10 malonyl-CoA extender units by successive Claisen-condensations. Next to this, FPY shares some rare features: C-glycosylated 4-deoxyglucose at C-3, a gem-dimethyl group at C-13, and an alpha-beta to beta-gamma double bond shift at C-20. During FPY biosynthesis mono-C-methyl groups are transferred to the tetra-, penta-, hexa- and heptaketide, while two C-methyl groups are transferred to the nonaketide, suggesting that the CMet domain is programmed to selectively catalyze two successive C-alpha-methylation reactions of the nonaketide, while other alpha-carbons are non- or mono-methylated only. While the origin of the 4'-deoxyglucose moiety remains opaque, its transfer to C-3 is most likely mediated by the C-glycosyltransferase FPY2. Next to this, the hydroxyl group present at C-33 and discriminating between FPY and dFPY, is likely to be installed by the cytochrome P450 monooxygenase FPY7. No putative function can be predicted for the remaining genes FPY3-FPY6. This Fusarium mangiferae (Mango malformation disease fungus) protein is Esterase FPY3.